The following is a 427-amino-acid chain: Ribosomal protein uS12 methylthiotransferase RimO (427 aa).

One can recognise an MTTase N-terminal domain in the interval 1 to 116; the sequence is MNFYVDVLGC…IAENIGKESI (116 aa). [4Fe-4S] cluster is bound by residues Cys-10, Cys-46, Cys-79, Cys-145, Cys-149, and Cys-152. The 230-residue stretch at 131 to 360 folds into the Radical SAM core domain; the sequence is VDEKQYAYVK…MEEQSKISFE (230 aa). Residues 363–426 form the TRAM domain; it reads EKMVGKTFKV…VYDLEGKIVE (64 aa).

Belongs to the methylthiotransferase family. RimO subfamily. Requires [4Fe-4S] cluster as cofactor.

Its subcellular location is the cytoplasm. It carries out the reaction L-aspartate(89)-[ribosomal protein uS12]-hydrogen + (sulfur carrier)-SH + AH2 + 2 S-adenosyl-L-methionine = 3-methylsulfanyl-L-aspartate(89)-[ribosomal protein uS12]-hydrogen + (sulfur carrier)-H + 5'-deoxyadenosine + L-methionine + A + S-adenosyl-L-homocysteine + 2 H(+). Its function is as follows. Catalyzes the methylthiolation of an aspartic acid residue of ribosomal protein uS12. The chain is Ribosomal protein uS12 methylthiotransferase RimO from Thermosipho africanus (strain TCF52B).